The primary structure comprises 701 residues: Elongation factor G (701 aa).

The tr-type G domain maps to 8-290 (ERYRNIGISA…AVVDYLPAPT (283 aa)). GTP contacts are provided by residues 17 to 24 (AHIDAGKT), 88 to 92 (DTPGH), and 142 to 145 (NKMD).

Belongs to the TRAFAC class translation factor GTPase superfamily. Classic translation factor GTPase family. EF-G/EF-2 subfamily.

The protein resides in the cytoplasm. In terms of biological role, catalyzes the GTP-dependent ribosomal translocation step during translation elongation. During this step, the ribosome changes from the pre-translocational (PRE) to the post-translocational (POST) state as the newly formed A-site-bound peptidyl-tRNA and P-site-bound deacylated tRNA move to the P and E sites, respectively. Catalyzes the coordinated movement of the two tRNA molecules, the mRNA and conformational changes in the ribosome. This Aeromonas hydrophila subsp. hydrophila (strain ATCC 7966 / DSM 30187 / BCRC 13018 / CCUG 14551 / JCM 1027 / KCTC 2358 / NCIMB 9240 / NCTC 8049) protein is Elongation factor G.